We begin with the raw amino-acid sequence, 135 residues long: Transcriptional activator protein (135 aa).

The Nuclear localization signal signature appears at 17–32 (KIQHHIAKKRQVRRRR). The segment at 37-54 (CGCSYYIHLDCINHGFTH) is a zinc-finger region. The segment at 120-135 (HLDDLTVSDWSFFKSL) is transactivation.

Belongs to the geminiviridae transcriptional activator protein family. In terms of assembly, monomer. Homodimer. Homooligomer. Self-interaction correlates with nuclear localization and efficient activation of transcription. Monomers suppress local silencing by interacting with and inactivating host adenosine kinase 2 (ADK2) in the cytoplasm. Interacts with and inhibits host SNF1 kinase. Binds to ssDNA. May interact with host RPS27A. Phosphorylated.

It localises to the host nucleus. Its subcellular location is the host cytoplasm. Multifunctional protein that modulates host antiviral defenses and promotes host attractiveness to insect vectors. Acts as a suppressor of RNA-mediated gene silencing, also known as post-transcriptional gene silencing (PTGS), a mechanism of plant viral defense that limits the accumulation of viral RNAs. TrAP suppresses the host RNA silencing by inhibiting adenosine kinase 2 (ADK2), a kinase involved in a general methylation pathway. Also suppresses the host basal defense by interacting with and inhibiting SNF1 kinase, a key regulator of cell metabolism implicated in innate antiviral defense. In terms of biological role, inhibits signal transduction by the phytohormone jasmonate, making the infected plant more attractive to aphids, which are the second host to play a role as a dissemination vector. Acts by binding to ubiquitin precursor RPS27A, thereby preventing ubiquitin degradation of JAZ. This is Transcriptional activator protein from Capsicum annuum (Capsicum pepper).